A 206-amino-acid chain; its full sequence is dITP/XTP pyrophosphatase (206 aa).

Residue 7–12 (SSHGYK) coordinates substrate. D70 functions as the Proton acceptor in the catalytic mechanism. Position 70 (D70) interacts with Mg(2+). Substrate is bound by residues T71, 154 to 157 (FGYD), K177, and 182 to 183 (HR).

It belongs to the HAM1 NTPase family. Homodimer. Requires Mg(2+) as cofactor.

It carries out the reaction XTP + H2O = XMP + diphosphate + H(+). It catalyses the reaction dITP + H2O = dIMP + diphosphate + H(+). The catalysed reaction is ITP + H2O = IMP + diphosphate + H(+). Pyrophosphatase that catalyzes the hydrolysis of nucleoside triphosphates to their monophosphate derivatives, with a high preference for the non-canonical purine nucleotides XTP (xanthosine triphosphate), dITP (deoxyinosine triphosphate) and ITP. Seems to function as a house-cleaning enzyme that removes non-canonical purine nucleotides from the nucleotide pool, thus preventing their incorporation into DNA/RNA and avoiding chromosomal lesions. The chain is dITP/XTP pyrophosphatase from Chlamydia abortus (strain DSM 27085 / S26/3) (Chlamydophila abortus).